A 199-amino-acid chain; its full sequence is Peroxiredoxin 2 (199 aa).

Positions 8-166 constitute a Thioredoxin domain; the sequence is AFIGQPAPNF…TLRLIQAFQF (159 aa). Cysteine 53 (cysteine sulfenic acid (-SOH) intermediate) is an active-site residue.

This sequence belongs to the peroxiredoxin family. AhpC/Prx1 subfamily. As to quaternary structure, homodimer; disulfide-linked, upon oxidation.

The enzyme catalyses a hydroperoxide + [thioredoxin]-dithiol = an alcohol + [thioredoxin]-disulfide + H2O. In terms of biological role, thiol-specific peroxidase that catalyzes the reduction of hydrogen peroxide and organic hydroperoxides to water and alcohols, respectively. Plays a role in cell protection against oxidative stress by detoxifying peroxides and as sensor of hydrogen peroxide-mediated signaling events. The protein is Peroxiredoxin 2 (tsa-2) of Brugia malayi (Filarial nematode worm).